We begin with the raw amino-acid sequence, 224 residues long: Mammalian ependymin-related protein 1 (224 aa).

The first 37 residues, 1–37 (MPGRAPLHTVPGALGPWLLGCLWAWTLCGLCSLGAVG), serve as a signal peptide directing secretion. 3 disulfide bridges follow: cysteine 42/cysteine 172, cysteine 88/cysteine 222, and cysteine 113/cysteine 210. N-linked (GlcNAc...) asparagine glycosylation is found at asparagine 130 and asparagine 182.

Belongs to the ependymin family. In terms of assembly, homodimer. In terms of processing, N-glycosylated; the glycan contains mannose-6-phosphate moieties.

Its subcellular location is the lysosome lumen. The protein localises to the secreted. Its function is as follows. Binds anionic lipids and gangliosides at acidic pH. This chain is Mammalian ependymin-related protein 1 (EPDR1), found in Macaca fascicularis (Crab-eating macaque).